The sequence spans 102 residues: Large ribosomal subunit protein uL24 (102 aa).

Belongs to the universal ribosomal protein uL24 family. As to quaternary structure, part of the 50S ribosomal subunit.

Functionally, one of two assembly initiator proteins, it binds directly to the 5'-end of the 23S rRNA, where it nucleates assembly of the 50S subunit. One of the proteins that surrounds the polypeptide exit tunnel on the outside of the subunit. The chain is Large ribosomal subunit protein uL24 from Rhizobium etli (strain CIAT 652).